The sequence spans 456 residues: Phosphomethylpyrimidine synthase (456 aa).

Residues N80, M109, Y139, H175, 195 to 197, 236 to 239, and E275 each bind substrate; these read SRG and DSLR. H279 is a binding site for Zn(2+). A substrate-binding site is contributed by Y302. H343 serves as a coordination point for Zn(2+). Residues C423, C426, and C431 each contribute to the [4Fe-4S] cluster site.

Belongs to the ThiC family. Requires [4Fe-4S] cluster as cofactor.

It carries out the reaction 5-amino-1-(5-phospho-beta-D-ribosyl)imidazole + S-adenosyl-L-methionine = 4-amino-2-methyl-5-(phosphooxymethyl)pyrimidine + CO + 5'-deoxyadenosine + formate + L-methionine + 3 H(+). The protein operates within cofactor biosynthesis; thiamine diphosphate biosynthesis. Catalyzes the synthesis of the hydroxymethylpyrimidine phosphate (HMP-P) moiety of thiamine from aminoimidazole ribotide (AIR) in a radical S-adenosyl-L-methionine (SAM)-dependent reaction. This is Phosphomethylpyrimidine synthase from Prochlorococcus marinus (strain MIT 9515).